The chain runs to 1026 residues: Maternal effect protein staufen (1026 aa).

Positions 16-29 (AAHHHSHSHAHMHL) are enriched in basic residues. Disordered stretches follow at residues 16-159 (AAHH…QLPP), 190-210 (NHYG…SNYA), and 234-311 (TPVP…KDKT). Residues 70–111 (AQQQQQQQTSSNQAGAVAAAGAAYHHGNINSNSGSNISSNSN) show a composition bias toward low complexity. Polar residues predominate over residues 112 to 126 (QMQKIRQQHQHLSSS). 2 stretches are compositionally biased toward low complexity: residues 192-210 (YGSN…SNYA) and 234-256 (TPVP…NSTV). Basic and acidic residues predominate over residues 267 to 284 (TSQKPETRQEPASADDHV). Residues 285 to 303 (STGNIDATGALSNEDTSSS) show a composition bias toward polar residues. DRBM domains follow at residues 311–378 (TPMC…ETMY) and 490–557 (PKFP…VLKT). A phosphoserine mark is found at Ser563 and Ser570. One can recognise a DRBM 3 domain in the interval 578–645 (SPISQVHEIG…AEKMLVELQK (68 aa)). RNA-binding residues include His606, Lys608, Lys628, Lys629, and Lys632. Residues 647–707 (PPLTPTKQTP…PPKDKLIDMD (61 aa)) are disordered. 2 positions are modified to phosphothreonine: Thr650 and Thr655. Residue Ser676 is modified to Phosphoserine. A compositionally biased stretch (polar residues) spans 678–688 (VSGTDGPTQTG). The 71-residue stretch at 711 to 781 (NPITKLIQLQ…AQALFELLEA (71 aa)) folds into the DRBM 4 domain. Residues 855–948 (ESKEEEANKE…SNSTSNTQSA (94 aa)) form a disordered region. Residues 864-890 (EVAVAAEENSNNSANSGDSSNSSSGDS) show a composition bias toward low complexity. A compositionally biased stretch (polar residues) spans 891–901 (QATEAASESAL). Low complexity-rich tracts occupy residues 902–920 (NTST…SNVG) and 934–947 (NTES…NTQS). Positions 951–1018 (HMKEQLLYLS…ASNALKILSK (68 aa)) constitute a DRBM 5 domain.

In terms of assembly, component of neuronal ribonucleoprotein complexes (RNPs) that contains at least various translational repressor and mRNA turnover proteins such as me31B, tral, Upf1, AGO2 and sometimes Fmr1. As to expression, polar granules at the posterior pole of the oocyte, and by the time the egg is laid, at the anterior pole.

It localises to the cytoplasm. The protein resides in the cytoplasmic ribonucleoprotein granule. In terms of biological role, RNA-binding protein which forms ribonucleoprotein complexes (RNPs) that play critical roles in the localization, translational repression and turnover of RNAs during embryogenesis, neurotransmission and neurogenesis. In the oocyte, essential for the localization of both the osk/oskar mRNA to the posterior pole and bcd/bicoid RNA to the anterior pole, and is therefore required for the correct anterior-posterior patterning of the developing embryo. Association with osk or bcd at their respective poles, appears to promote the formation and stabilization of the ribonucleoprotein complexes. Integral component of diverse neuritic ribonucleoprotein complexes (RNPs) that mediate the transport, translation and turnover of neuronal RNAs during neuorgenesis and the translation repression of synaptic transcripts in preparation for their dendritic targeting. The sequence is that of Maternal effect protein staufen (stau) from Drosophila melanogaster (Fruit fly).